A 309-amino-acid chain; its full sequence is Aspartate carbamoyltransferase catalytic subunit (309 aa).

The carbamoyl phosphate site is built by R55 and T56. K85 serves as a coordination point for L-aspartate. Carbamoyl phosphate contacts are provided by R106, H135, and Q138. The L-aspartate site is built by R168 and R230. The carbamoyl phosphate site is built by L268 and P269.

It belongs to the aspartate/ornithine carbamoyltransferase superfamily. ATCase family. As to quaternary structure, heterododecamer (2C3:3R2) of six catalytic PyrB chains organized as two trimers (C3), and six regulatory PyrI chains organized as three dimers (R2).

It catalyses the reaction carbamoyl phosphate + L-aspartate = N-carbamoyl-L-aspartate + phosphate + H(+). The protein operates within pyrimidine metabolism; UMP biosynthesis via de novo pathway; (S)-dihydroorotate from bicarbonate: step 2/3. In terms of biological role, catalyzes the condensation of carbamoyl phosphate and aspartate to form carbamoyl aspartate and inorganic phosphate, the committed step in the de novo pyrimidine nucleotide biosynthesis pathway. The chain is Aspartate carbamoyltransferase catalytic subunit from Aliivibrio fischeri (strain ATCC 700601 / ES114) (Vibrio fischeri).